Consider the following 734-residue polypeptide: Photosystem I P700 chlorophyll a apoprotein A2 (734 aa).

The next 8 membrane-spanning stretches (helical) occupy residues 46–69, 135–158, 175–199, 273–291, 330–353, 369–395, 417–439, and 517–535; these read IFAS…FHVA, LYIG…LHLQ, LNHH…HVAI, IAHH…GHMY, LHFQ…QHMY, AALY…IFFI, AIIS…LYVH, and FLVH…LILV. Cys559 and Cys568 together coordinate [4Fe-4S] cluster. The next 2 helical transmembrane spans lie at 575-596 and 643-665; these read AFYL…YWHW and LSVW…MFLI. His654, Met662, and Tyr670 together coordinate chlorophyll a. A phylloquinone-binding site is contributed by Trp671. The chain crosses the membrane as a helical span at residues 707-727; the sequence is VVGLAHFSVGYVFTYAAFLIA.

It belongs to the PsaA/PsaB family. In terms of assembly, the PsaA/B heterodimer binds the P700 chlorophyll special pair and subsequent electron acceptors. PSI consists of a core antenna complex that captures photons, and an electron transfer chain that converts photonic excitation into a charge separation. The eukaryotic PSI reaction center is composed of at least 11 subunits. P700 is a chlorophyll a/chlorophyll a' dimer, A0 is one or more chlorophyll a, A1 is one or both phylloquinones and FX is a shared 4Fe-4S iron-sulfur center. serves as cofactor.

Its subcellular location is the plastid. The protein resides in the chloroplast thylakoid membrane. The enzyme catalyses reduced [plastocyanin] + hnu + oxidized [2Fe-2S]-[ferredoxin] = oxidized [plastocyanin] + reduced [2Fe-2S]-[ferredoxin]. Its function is as follows. PsaA and PsaB bind P700, the primary electron donor of photosystem I (PSI), as well as the electron acceptors A0, A1 and FX. PSI is a plastocyanin-ferredoxin oxidoreductase, converting photonic excitation into a charge separation, which transfers an electron from the donor P700 chlorophyll pair to the spectroscopically characterized acceptors A0, A1, FX, FA and FB in turn. Oxidized P700 is reduced on the lumenal side of the thylakoid membrane by plastocyanin. This is Photosystem I P700 chlorophyll a apoprotein A2 from Mesostigma viride (Green alga).